A 108-amino-acid chain; its full sequence is ATP synthase peripheral stalk subunit F6, mitochondrial (108 aa).

The N-terminal 32 residues, 1 to 32 (MILQRLFRFSSVIRSAVSVHLRRNIGVTAVAF), are a transit peptide targeting the mitochondrion. Lys-41 and Lys-46 each carry N6-acetyllysine. Phosphoserine is present on Ser-65. Position 79 is an N6-acetyllysine (Lys-79). N6-acetyllysine; alternate is present on residues Lys-94 and Lys-99. N6-succinyllysine; alternate occurs at positions 94 and 99. Lys-105 carries the post-translational modification N6-acetyllysine.

The protein belongs to the eukaryotic ATPase subunit F6 family. As to quaternary structure, component of the ATP synthase complex composed at least of ATP5F1A/subunit alpha, ATP5F1B/subunit beta, ATP5MC1/subunit c (homooctomer), MT-ATP6/subunit a, MT-ATP8/subunit 8, ATP5ME/subunit e, ATP5MF/subunit f, ATP5MG/subunit g, ATP5MK/subunit k, ATP5MJ/subunit j, ATP5F1C/subunit gamma, ATP5F1D/subunit delta, ATP5F1E/subunit epsilon, ATP5PF/subunit F6, ATP5PB/subunit b, ATP5PD/subunit d, ATP5PO/subunit OSCP. ATP synthase complex consists of a soluble F(1) head domain (subunits alpha(3) and beta(3)) - the catalytic core - and a membrane F(0) domain - the membrane proton channel (subunits c, a, 8, e, f, g, k and j). These two domains are linked by a central stalk (subunits gamma, delta, and epsilon) rotating inside the F1 region and a stationary peripheral stalk (subunits F6, b, d, and OSCP).

The protein resides in the mitochondrion. Its subcellular location is the mitochondrion inner membrane. Subunit F6, of the mitochondrial membrane ATP synthase complex (F(1)F(0) ATP synthase or Complex V) that produces ATP from ADP in the presence of a proton gradient across the membrane which is generated by electron transport complexes of the respiratory chain. ATP synthase complex consist of a soluble F(1) head domain - the catalytic core - and a membrane F(1) domain - the membrane proton channel. These two domains are linked by a central stalk rotating inside the F(1) region and a stationary peripheral stalk. During catalysis, ATP synthesis in the catalytic domain of F(1) is coupled via a rotary mechanism of the central stalk subunits to proton translocation. In vivo, can only synthesize ATP although its ATP hydrolase activity can be activated artificially in vitro. Part of the complex F(0) domain. Part of the complex F(0) domain and the peripheric stalk, which acts as a stator to hold the catalytic alpha(3)beta(3) subcomplex and subunit a/ATP6 static relative to the rotary elements. The polypeptide is ATP synthase peripheral stalk subunit F6, mitochondrial (Homo sapiens (Human)).